The chain runs to 366 residues: 3-dehydroquinate synthase (366 aa).

NAD(+)-binding positions include 75 to 80, 109 to 113, 133 to 134, lysine 146, lysine 155, and 173 to 176; these read DGEQYK, GVIGD, TT, and CLST. Zn(2+) contacts are provided by glutamate 188, histidine 251, and histidine 268.

The protein belongs to the sugar phosphate cyclases superfamily. Dehydroquinate synthase family. The cofactor is Co(2+). Zn(2+) serves as cofactor. Requires NAD(+) as cofactor.

The protein resides in the cytoplasm. It catalyses the reaction 7-phospho-2-dehydro-3-deoxy-D-arabino-heptonate = 3-dehydroquinate + phosphate. It participates in metabolic intermediate biosynthesis; chorismate biosynthesis; chorismate from D-erythrose 4-phosphate and phosphoenolpyruvate: step 2/7. Catalyzes the conversion of 3-deoxy-D-arabino-heptulosonate 7-phosphate (DAHP) to dehydroquinate (DHQ). This is 3-dehydroquinate synthase from Vibrio campbellii (strain ATCC BAA-1116).